The primary structure comprises 334 residues: Glycerol-1-phosphate dehydrogenase [NAD(P)+] (334 aa).

NAD(+) contacts are provided by residues 77–81 (GRPID) and 99–102 (TTAS). Asp104 lines the substrate pocket. Ser108 contacts NAD(+). Asp147 serves as a coordination point for substrate. 2 residues coordinate Zn(2+): Asp147 and His225. His229 is a substrate binding site. His246 is a Zn(2+) binding site.

It belongs to the glycerol-1-phosphate dehydrogenase family. Zn(2+) serves as cofactor.

It localises to the cytoplasm. It catalyses the reaction sn-glycerol 1-phosphate + NAD(+) = dihydroxyacetone phosphate + NADH + H(+). It carries out the reaction sn-glycerol 1-phosphate + NADP(+) = dihydroxyacetone phosphate + NADPH + H(+). The protein operates within membrane lipid metabolism; glycerophospholipid metabolism. Functionally, catalyzes the NAD(P)H-dependent reduction of dihydroxyacetonephosphate (DHAP or glycerone phosphate) to glycerol 1-phosphate (G1P). The G1P thus generated is used as the glycerophosphate backbone of phospholipids in the cellular membranes of Archaea. The chain is Glycerol-1-phosphate dehydrogenase [NAD(P)+] from Methanococcus maripaludis (strain C6 / ATCC BAA-1332).